Reading from the N-terminus, the 107-residue chain is Probable 4-amino-4-deoxy-L-arabinose-phosphoundecaprenol flippase subunit ArnE (107 aa).

The EamA domain occupies 31-105 (RVWGWLALSL…IIVGIILLGG (75 aa)). Transmembrane regions (helical) follow at residues 34-54 (GWLALSLVLLGCAMLLWLFVL), 57-77 (VPVSVAYPMLSLNFIFITLAA), and 85-105 (IALRHGVGVLLIIVGIILLGG).

This sequence belongs to the ArnE family. Heterodimer of ArnE and ArnF.

It is found in the cell inner membrane. Its pathway is bacterial outer membrane biogenesis; lipopolysaccharide biosynthesis. Its function is as follows. Translocates 4-amino-4-deoxy-L-arabinose-phosphoundecaprenol (alpha-L-Ara4N-phosphoundecaprenol) from the cytoplasmic to the periplasmic side of the inner membrane. This Enterobacter sp. (strain 638) protein is Probable 4-amino-4-deoxy-L-arabinose-phosphoundecaprenol flippase subunit ArnE.